The sequence spans 589 residues: Chromodomain Y-like protein (589 aa).

Over residues 1–10 (MGLGSSQPST) the composition is skewed to polar residues. Residues 1 to 57 (MGLGSSQPSTKEAEPCTLQEKEEHPVDDTRQQNNAVPATVSDPDQVSPAVQDAETQV) form a disordered region. Over residues 11 to 30 (KEAEPCTLQEKEEHPVDDTR) the composition is skewed to basic and acidic residues. The 61-residue stretch at 55–115 (TQVESIVDKR…RHNERQKEGT (61 aa)) folds into the Chromo domain. Residues 55–300 (TQVESIVDKR…TIQTSVTGVT (246 aa)) are interaction with EZH2. Ser-82 carries the post-translational modification Phosphoserine. Residues 110-155 (RQKEGTLARANRASPSNARKQISRSTHSALSKTNPKALVVGKDHES) form a disordered region. Low complexity predominate over residues 117–128 (ARANRASPSNAR). Lys-129 carries the post-translational modification N6,N6,N6-trimethyllysine; by EHMT2; alternate. Lys-129 bears the N6,N6-dimethyllysine; by EHMT2; alternate mark. Lys-129 is subject to N6-methyllysine; by EHMT2; alternate. Over residues 132-143 (SRSTHSALSKTN) the composition is skewed to polar residues. 3 positions are modified to phosphoserine: Ser-164, Ser-195, and Ser-210. Residues 202–224 (SIDGFHGESPEKLDQGAEDTVTP) are disordered. The segment covering 206-216 (FHGESPEKLDQ) has biased composition (basic and acidic residues). The interval 353–585 (SENNSLNPEV…DSMLKYLQRK (233 aa)) is acetyl-CoA-binding domain.

As to quaternary structure, forms multimers and multimerization is required for stable binding to chromatin. Interacts with HDAC1 and HDAC2 via its C-terminal acetyl-CoA-binding domain. Interacts with EZH2, EED, SUZ12, REST, EHMT1 and EHMT2. Part of a complex containing at least CDYL, REST, WIZ, SETB1, EHMT1 and EHMT2. Part of a complex containing at least CDYL, MIER1, MIER2, HDAC1 and HDAC2. Interacts with CHAF1A and CHAF1B; bridging the CAF-1 complex to the MCM2-7 (MCM) complex. Interacts with MCM3 and MCM5; bridging the CAF-1 complex to the MCM2-7 (MCM) complex. Recruited to Xist RNA-coated X chromosome. Interacts with EHMT2 and PRDM9; interaction only takes place when PRDM9 is bound to hotspot DNA. Expressed in the brain, with expression in the hippocampal dentate gyrus, CA1, striatum and cortex (at protein level). Expressed in the prelimbic cortex.

It is found in the nucleus. It localises to the chromosome. It catalyses the reaction 3-hydroxybutanoyl-CoA = (2E)-butenoyl-CoA + H2O. Functionally, chromatin reader protein that recognizes and binds histone H3 trimethylated at 'Lys-9', dimethylated at 'Lys-27' and trimethylated at 'Lys-27' (H3K9me3, H3K27me2 and H3K27me3, respectively). Part of multimeric repressive chromatin complexes, where it is required for transmission and restoration of repressive histone marks, thereby preserving the epigenetic landscape. Required for chromatin targeting and maximal enzymatic activity of Polycomb repressive complex 2 (PRC2); acts as a positive regulator of PRC2 activity by bridging the pre-existing histone H3K27me3 and newly recruited PRC2 on neighboring nucleosomes. Acts as a corepressor for REST by facilitating histone-lysine N-methyltransferase EHMT2 recruitment and H3K9 dimethylation at REST target genes for repression. Involved in X chromosome inactivation in females: recruited to Xist RNA-coated X chromosome and facilitates propagation of H3K9me2 by anchoring EHMT2. Promotes EZH2 accumulation and H3K27me3 methylation at DNA double strand breaks (DSBs), thereby facilitating transcriptional repression at sites of DNA damage and homology-directed repair of DSBs. Required for neuronal migration during brain development by repressing expression of RHOA. By repressing the expression of SCN8A, contributes to the inhibition of intrinsic neuronal excitability and epileptogenesis. In addition to acting as a chromatin reader, acts as a hydro-lyase. Shows crotonyl-coA hydratase activity by mediating the conversion of crotonyl-CoA ((2E)-butenoyl-CoA) to beta-hydroxybutyryl-CoA (3-hydroxybutanoyl-CoA), thereby acting as a negative regulator of histone crotonylation. Histone crotonylation is required during spermatogenesis; down-regulation of histone crotonylation by CDYL regulates the reactivation of sex chromosome-linked genes in round spermatids and histone replacement in elongating spermatids. By regulating histone crotonylation and trimethylation of H3K27, may be involved in stress-induced depression-like behaviors, possibly by regulating VGF expression. Displays acetyltransferase activity toward tubulin in vitro; such activity is however unsure in vivo and additional evidences would be required to confirm this result. Not able to recognize and bind histone H3K9me3, histone H3K27me2 and histone H3K27me3, due to the presence of a N-terminal extension that inactivates the chromo domain. The polypeptide is Chromodomain Y-like protein (Rattus norvegicus (Rat)).